We begin with the raw amino-acid sequence, 358 residues long: Histidinol-phosphate aminotransferase (358 aa).

The residue at position 217 (Lys217) is an N6-(pyridoxal phosphate)lysine.

Belongs to the class-II pyridoxal-phosphate-dependent aminotransferase family. Histidinol-phosphate aminotransferase subfamily. As to quaternary structure, homodimer. It depends on pyridoxal 5'-phosphate as a cofactor.

It catalyses the reaction L-histidinol phosphate + 2-oxoglutarate = 3-(imidazol-4-yl)-2-oxopropyl phosphate + L-glutamate. It participates in amino-acid biosynthesis; L-histidine biosynthesis; L-histidine from 5-phospho-alpha-D-ribose 1-diphosphate: step 7/9. This Ruminiclostridium cellulolyticum (strain ATCC 35319 / DSM 5812 / JCM 6584 / H10) (Clostridium cellulolyticum) protein is Histidinol-phosphate aminotransferase.